A 242-amino-acid polypeptide reads, in one-letter code: Probable 2-phosphosulfolactate phosphatase (242 aa).

The protein belongs to the ComB family. Mg(2+) is required as a cofactor.

It carries out the reaction (2R)-O-phospho-3-sulfolactate + H2O = (2R)-3-sulfolactate + phosphate. The chain is Probable 2-phosphosulfolactate phosphatase from Parasynechococcus marenigrum (strain WH8102).